Reading from the N-terminus, the 709-residue chain is ATP-binding cassette sub-family F member 3 (709 aa).

N-acetylalanine is present on Ala2. Position 83 is a phosphoserine (Ser83). Over residues Arg129–Leu143 the composition is skewed to basic and acidic residues. The disordered stretch occupies residues Arg129–Gly171. Phosphoserine occurs at positions 155, 157, and 161. Residues Ser161 to Gly171 show a composition bias toward basic and acidic residues. 2 ABC transporter domains span residues Val178 to Gln424 and Leu492 to Gly707. Gly210–Thr217 provides a ligand contact to ATP. Phosphoserine is present on Ser283. Residue Gly525–Ser532 participates in ATP binding.

This sequence belongs to the ABC transporter superfamily. ABCF family. EF3 subfamily.

Functionally, displays an antiviral effect against flaviviruses such as west Nile virus (WNV) in the presence of OAS1B. This chain is ATP-binding cassette sub-family F member 3 (Abcf3), found in Mus musculus (Mouse).